The chain runs to 145 residues: Large ribosomal subunit protein uL11 (145 aa).

Belongs to the universal ribosomal protein uL11 family. Part of the ribosomal stalk of the 50S ribosomal subunit. Interacts with L10 and the large rRNA to form the base of the stalk. L10 forms an elongated spine to which L12 dimers bind in a sequential fashion forming a multimeric L10(L12)X complex. In terms of processing, one or more lysine residues are methylated.

Functionally, forms part of the ribosomal stalk which helps the ribosome interact with GTP-bound translation factors. The sequence is that of Large ribosomal subunit protein uL11 from Rickettsia africae (strain ESF-5).